A 1251-amino-acid polypeptide reads, in one-letter code: Insulin receptor substrate 1 (1251 aa).

Ser3 is subject to Phosphoserine. The segment at 3 to 137 (SPPESDGFSD…GAGGGGGSCS (135 aa)) is mediates interaction with PHIP. The PH domain maps to 12 to 115 (DVRKVGYLRK…WYQALLQLHN (104 aa)). Ser99 bears the Phosphoserine; by CK2 mark. Residues 160 to 264 (FKEVWQVILK…EAMRAMSDEF (105 aa)) form the IRS-type PTB domain. The interval 262-430 (DEFRPRSKSQ…SDGGFISSDE (169 aa)) is disordered. Positions 269–281 (KSQSSSNCSNPIS) are enriched in low complexity. The residue at position 270 (Ser270) is a Phosphoserine. Ser307 carries the phosphoserine; by RPS6KB1 modification. Ser312 is subject to Phosphoserine; by IKKB, MAPK8 and RPS6KB1. 4 positions are modified to phosphoserine: Ser323, Ser330, Ser345, and Ser348. Residues 354-363 (THAHRHRGSA) are compositionally biased toward basic residues. Low complexity-rich tracts occupy residues 383 to 404 (SPSATSPVSLSSSSTSGHGSTS) and 412 to 424 (SSASVSGSPSDGG). A Phosphoserine modification is found at Ser419. A phosphothreonine mark is found at Thr446 and Thr453. Tyr465 carries the post-translational modification Phosphotyrosine; by INSR. A YXXM motif 1 motif is present at residues 465 to 468 (YICM). The tract at residues 494-513 (YTPGTGLGTSPALAGDEASS) is disordered. The residue at position 527 (Ser527) is a Phosphoserine; by RPS6KB1. Positions 551 to 554 (YTEM) match the YXXM motif 2 motif. Positions 594 to 610 (RRGGHHRPDSSTLHTDD) are enriched in basic and acidic residues. The tract at residues 594 to 616 (RRGGHHRPDSSTLHTDDGYMPMS) is disordered. A Phosphotyrosine; by INSR modification is found at Tyr612. A YXXM motif 3 motif is present at residues 612 to 615 (YMPM). Ser629 carries the phosphoserine modification. Tyr632 carries the phosphotyrosine; by INSR modification. The YXXM motif 4 motif lies at 632-635 (YMPM). At Ser636 the chain carries Phosphoserine; by RPS6KB1. A Phosphotyrosine modification is found at Tyr662. Positions 662-665 (YMMM) match the YXXM motif 5 motif. Residues 668–692 (SGGCSPDIGGGPSSSSSSTVPSGSS) are disordered. Residues 730-733 (YMNM) carry the YXXM motif 6 motif. Disordered stretches follow at residues 734–753 (SPVGDSNTSSPSDCYYGPED) and 769–946 (FKHT…EETG). Over residues 774 to 783 (RPGEPEEGAR) the composition is skewed to basic and acidic residues. Position 792 is a phosphoserine; by AMPK and SIK2 (Ser792). 2 stretches are compositionally biased toward low complexity: residues 799 to 813 (AATADDSSSSTSSDS) and 875 to 891 (QQQQQQQQQQQQQQQQQ). A Phosphoserine modification is found at Ser901. Tyr905 carries the phosphotyrosine; by INSR modification. The tract at residues 905–907 (YVN) is GRB2-binding. Polar residues predominate over residues 924-937 (SRSSPSVRCPSQLQ). 2 positions are modified to phosphotyrosine; by INSR: Tyr950 and Tyr998. Short sequence motifs (YXXM motif) lie at residues 950–953 (YMKM), 998–1001 (YMTM), and 1021–1024 (YADM). 2 disordered regions span residues 1091–1124 (NQSAKVIRADPQGCRRRHSSETFSSTPSATRVGN) and 1130–1149 (AGAAIGGSGGSSSSSEDVKR). Ser1109 and Ser1110 each carry phosphoserine. Polar residues predominate over residues 1111 to 1123 (ETFSSTPSATRVG). Phosphotyrosine; by INSR is present on Tyr1188. Lys1195 participates in a covalent cross-link: Glycyl lysine isopeptide (Lys-Gly) (interchain with G-Cter in ubiquitin). Residues 1195–1251 (KDFKQRPQECTPQPQPPPPPPPHQPLGSSESSSTRRSSEDLSAYASISFQKQPEDLQ) form a disordered region. Residues 1207–1218 (QPQPPPPPPPHQ) show a composition bias toward pro residues. Tyr1238 bears the Phosphotyrosine; by INSR mark.

In terms of assembly, interacts with UBTF and PIK3CA. Interacts (via phosphorylated YXXM motifs) with PIK3R1. Interacts with ROCK1 and FER. Interacts (via PH domain) with PHIP. Interacts with GRB2. Interacts with SOCS7. Interacts (via IRS-type PTB domain) with IGF1R and INSR (via the tyrosine-phosphorylated NPXY motif). Interacts with ALK. Interacts with EIF2AK2/PKR. Interacts with GKAP1. Interacts with DGKZ in the absence of insulin; insulin stimulation decreases this interaction. Found in a ternary complex with DGKZ and PIP5K1A in the absence of insulin stimulation. Interacts with SQSTM1; the interaction is disrupted by the presence of tensin TNS2. Interacts with NCK1 (via SH2 domain). Interacts with NCK2 (via SH3 domain). Interacts with SH2B1; this interaction enhances leptin-induced activation of the PI3-kinase pathway. Interacts with DVL2; this interaction promotes the Wnt/beta-catenin signaling pathway. Interacts with JAK1. In terms of processing, serine phosphorylation of IRS1 is a mechanism for insulin resistance. Ser-312 phosphorylation inhibits insulin action through disruption of IRS1 interaction with the insulin receptor. Phosphorylation of Tyr-905 is required for GRB2-binding. Phosphorylated by ALK. Phosphorylated at Ser-270, Ser-307, Ser-636 and Ser-1109 by RPS6KB1; phosphorylation induces accelerated degradation of IRS1. Phosphorylated on tyrosine residues in response to insulin. In skeletal muscles, dephosphorylated on Tyr-612 by TNS2 under anabolic conditions; dephosphorylation results in the proteasomal degradation of IRS1. Ubiquitinated by the Cul7-RING(FBXW8) complex in a mTOR-dependent manner, leading to its degradation: the Cul7-RING(FBXW8) complex recognizes and binds IRS1 previously phosphorylated by S6 kinase (RPS6KB1 or RPS6KB2). Ubiquitinated by TRAF4 through 'Lys-29' linkage; this ubiquitination regulates the interaction of IRS1 with IGFR and IRS1 tyrosine phosphorylation upon IGF1 stimulation. Post-translationally, S-nitrosylation at by BLVRB inhibits its activity.

Its subcellular location is the cytoplasm. It is found in the nucleus. Functionally, signaling adapter protein that participates in the signal transduction from two prominent receptor tyrosine kinases, insulin receptor/INSR and insulin-like growth factor I receptor/IGF1R. Plays therefore an important role in development, growth, glucose homeostasis as well as lipid metabolism. Upon phosphorylation by the insulin receptor, functions as a signaling scaffold that propagates insulin action through binding to SH2 domain-containing proteins including the p85 regulatory subunit of PI3K, NCK1, NCK2, GRB2 or SHP2. Recruitment of GRB2 leads to the activation of the guanine nucleotide exchange factor SOS1 which in turn triggers the Ras/Raf/MEK/MAPK signaling cascade. Activation of the PI3K/AKT pathway is responsible for most of insulin metabolic effects in the cell, and the Ras/Raf/MEK/MAPK is involved in the regulation of gene expression and in cooperation with the PI3K pathway regulates cell growth and differentiation. Acts a positive regulator of the Wnt/beta-catenin signaling pathway through suppression of DVL2 autophagy-mediated degradation leading to cell proliferation. This is Insulin receptor substrate 1 (IRS1) from Chlorocebus aethiops (Green monkey).